A 750-amino-acid polypeptide reads, in one-letter code: Penicillin-binding protein 2x (750 aa).

A helical transmembrane segment spans residues Leu-29–Gly-49. Ser-337 (acyl-ester intermediate) is an active-site residue. 2 consecutive PASTA domains span residues Gln-632 to Asp-691 and Lys-692 to Asp-750.

The protein belongs to the transpeptidase family.

It localises to the cell membrane. In terms of biological role, a transpeptidase that forms peptide cross-links between adjacent glycan strands in cell wall peptidoglycan (PG). Part of the divisome machinery that synthesizes the septal cross wall. Beta-lactams inactivate the PBPs by acylating an essential serine residue in the active site of these proteins. This is Penicillin-binding protein 2x (pbpX) from Streptococcus pneumoniae serotype 4 (strain ATCC BAA-334 / TIGR4).